Here is a 491-residue protein sequence, read N- to C-terminus: Endoglucanase 14 (491 aa).

A signal peptide spans 1-31; the sequence is MSQLKIGSSQCLWTSICIVLFVLSMARGAVS. Residue D86 is the Nucleophile of the active site. An N-linked (GlcNAc...) asparagine glycan is attached at N397. Catalysis depends on residues H413, D465, and E474.

It belongs to the glycosyl hydrolase 9 (cellulase E) family.

It is found in the secreted. The enzyme catalyses Endohydrolysis of (1-&gt;4)-beta-D-glucosidic linkages in cellulose, lichenin and cereal beta-D-glucans.. In Arabidopsis thaliana (Mouse-ear cress), this protein is Endoglucanase 14.